Here is a 400-residue protein sequence, read N- to C-terminus: Tryptophan synthase beta chain (400 aa).

Lys92 carries the post-translational modification N6-(pyridoxal phosphate)lysine.

This sequence belongs to the TrpB family. Tetramer of two alpha and two beta chains. It depends on pyridoxal 5'-phosphate as a cofactor.

It catalyses the reaction (1S,2R)-1-C-(indol-3-yl)glycerol 3-phosphate + L-serine = D-glyceraldehyde 3-phosphate + L-tryptophan + H2O. It functions in the pathway amino-acid biosynthesis; L-tryptophan biosynthesis; L-tryptophan from chorismate: step 5/5. Its function is as follows. The beta subunit is responsible for the synthesis of L-tryptophan from indole and L-serine. In Neisseria gonorrhoeae, this protein is Tryptophan synthase beta chain.